The chain runs to 541 residues: NADH-ubiquinone oxidoreductase chain 5 (541 aa).

16 consecutive transmembrane segments (helical) span residues Leu-17–Phe-37, Thr-48–Met-70, Phe-74–Met-94, Gly-98–Phe-118, Ile-130–Phe-150, Tyr-157–Thr-177, Ala-191–Tyr-213, Gly-226–Phe-246, Leu-263–Phe-283, His-285–Val-305, Ser-322–Phe-342, Ser-353–Tyr-373, Leu-404–Gly-424, Ile-429–Leu-449, Ser-455–Gly-475, and Phe-518–Met-538.

The protein belongs to the complex I subunit 5 family.

The protein resides in the mitochondrion inner membrane. It carries out the reaction a ubiquinone + NADH + 5 H(+)(in) = a ubiquinol + NAD(+) + 4 H(+)(out). Functionally, core subunit of the mitochondrial membrane respiratory chain NADH dehydrogenase (Complex I) that is believed to belong to the minimal assembly required for catalysis. Complex I functions in the transfer of electrons from NADH to the respiratory chain. The immediate electron acceptor for the enzyme is believed to be ubiquinone. This chain is NADH-ubiquinone oxidoreductase chain 5 (ND5), found in Artemia franciscana (Brine shrimp).